Consider the following 330-residue polypeptide: Aspartate--ammonia ligase (330 aa).

It belongs to the class-II aminoacyl-tRNA synthetase family. AsnA subfamily.

The protein localises to the cytoplasm. It catalyses the reaction L-aspartate + NH4(+) + ATP = L-asparagine + AMP + diphosphate + H(+). It functions in the pathway amino-acid biosynthesis; L-asparagine biosynthesis; L-asparagine from L-aspartate (ammonia route): step 1/1. This chain is Aspartate--ammonia ligase, found in Streptococcus pyogenes serotype M3 (strain ATCC BAA-595 / MGAS315).